The chain runs to 61 residues: Large ribosomal subunit protein uL30 (61 aa).

This sequence belongs to the universal ribosomal protein uL30 family. As to quaternary structure, part of the 50S ribosomal subunit.

In Frankia casuarinae (strain DSM 45818 / CECT 9043 / HFP020203 / CcI3), this protein is Large ribosomal subunit protein uL30.